The chain runs to 50 residues: Monellin chain B (50 aa).

Heterodimer of an A chain and a B chain.

Its function is as follows. Taste-modifying protein; intensely sweet-tasting protein. The sequence is that of Monellin chain B from Dioscoreophyllum cumminsii (Serendipity berry).